Reading from the N-terminus, the 390-residue chain is Delta-aminolevulinic acid dehydratase, chloroplastic (390 aa).

The N-terminal 24 residues, 1 to 24 (MQMMQRNVVGQRPVAGSRRSLVVA), are a transit peptide targeting the chloroplast. The tract at residues 34–69 (VSTNGKHRTGVPEGTPIVTPQDLPSRPRRNRRSESF) is disordered. The active-site Schiff-base intermediate with substrate is the Lys-251. 5-aminolevulinate-binding residues include Arg-261 and Lys-281. Glu-297 provides a ligand contact to Mg(2+). Lys-312 serves as the catalytic Schiff-base intermediate with substrate. 2 residues coordinate 5-aminolevulinate: Ser-338 and Tyr-377.

It belongs to the ALAD family. Homooctamer. Requires Mg(2+) as cofactor.

It is found in the plastid. The protein resides in the chloroplast. It catalyses the reaction 2 5-aminolevulinate = porphobilinogen + 2 H2O + H(+). The protein operates within porphyrin-containing compound metabolism; protoporphyrin-IX biosynthesis; coproporphyrinogen-III from 5-aminolevulinate: step 1/4. Functionally, catalyzes an early step in the biosynthesis of tetrapyrroles. Binds two molecules of 5-aminolevulinate per subunit, each at a distinct site, and catalyzes their condensation to form porphobilinogen. This is Delta-aminolevulinic acid dehydratase, chloroplastic (HEMB) from Chlamydomonas reinhardtii (Chlamydomonas smithii).